Consider the following 715-residue polypeptide: Nucleolar protein 9 (715 aa).

The tract at residues 1 to 52 (MPKPRGRRVQSAFKERVENSEATHENSIAETGSDVEISLHEDQPQTSDNKNQ) is disordered. Basic and acidic residues predominate over residues 13 to 24 (FKERVENSEATH). Pumilio repeat units lie at residues 99 to 134 (ESRG…HIFH), 135 to 170 (QFLG…EIVN), 206 to 243 (QLEP…TMAN), 291 to 326 (LDTK…RSVW), 340 to 377 (SEEA…RLYR), 379 to 415 (YMKD…HILD), 531 to 568 (LPQE…EVLI), and 575 to 613 (NLFQ…RIAS). Residues 688–698 (YQEERAKREGE) show a composition bias toward basic and acidic residues. A disordered region spans residues 688-715 (YQEERAKREGEDLAGSNQKRMKGRGRNR). Positions 706–715 (KRMKGRGRNR) are enriched in basic residues.

Belongs to the NOP9 family.

The protein localises to the nucleus. It localises to the nucleolus. RNA-binding nucleolar protein required for pre-rRNA processing. Involved in production of 18S rRNA and assembly of small ribosomal subunit. The polypeptide is Nucleolar protein 9 (NOP9) (Clavispora lusitaniae (strain ATCC 42720) (Yeast)).